A 168-amino-acid polypeptide reads, in one-letter code: ATP synthase subunit b (168 aa).

Residues 10 to 30 (STILGNFILVTASFAVLIILI) traverse the membrane as a helical segment.

It belongs to the ATPase B chain family. In terms of assembly, F-type ATPases have 2 components, F(1) - the catalytic core - and F(0) - the membrane proton channel. F(1) has five subunits: alpha(3), beta(3), gamma(1), delta(1), epsilon(1). F(0) has three main subunits: a(1), b(2) and c(10-14). The alpha and beta chains form an alternating ring which encloses part of the gamma chain. F(1) is attached to F(0) by a central stalk formed by the gamma and epsilon chains, while a peripheral stalk is formed by the delta and b chains.

It is found in the cell membrane. F(1)F(0) ATP synthase produces ATP from ADP in the presence of a proton or sodium gradient. F-type ATPases consist of two structural domains, F(1) containing the extramembraneous catalytic core and F(0) containing the membrane proton channel, linked together by a central stalk and a peripheral stalk. During catalysis, ATP synthesis in the catalytic domain of F(1) is coupled via a rotary mechanism of the central stalk subunits to proton translocation. Functionally, component of the F(0) channel, it forms part of the peripheral stalk, linking F(1) to F(0). This Streptococcus suis (strain 98HAH33) protein is ATP synthase subunit b.